Here is a 628-residue protein sequence, read N- to C-terminus: Putative serine esterase Mb1866c (628 aa).

Ser-156 acts as the Acyl-ester intermediate in catalysis. Active-site charge relay system residues include Asp-322 and His-350.

Belongs to the CocE/NonD hydrolase family.

This chain is Putative serine esterase Mb1866c, found in Mycobacterium bovis (strain ATCC BAA-935 / AF2122/97).